Here is a 322-residue protein sequence, read N- to C-terminus: MWFFGSKGASGFSSRSTAEEVTHGVDGTGLTAIVTGASSGIGVETARVLSLRGVHVVMAVRNTDSGAKVKEDIVKQVPGAKLDVMELDLSSMQSVRKFASEYKSTGLPLNLLINNAGIMACPFMLSKDNIELQFATNHLGHFLLTKLLLDTMKSTSRESKREGRIVNLSSEAHRFSYPEGVRFDKINDKSSYSSMRAYGQSKLCNVLHANELTKQLKEDGVNITANSLHPGAIMTNLGRYFNPYLAVAVGAVAKYILKSVPQGAATTCYVALNPQVAGVSGEYFQDSNIAKPLPLVKDTELAKKVWDFSTKLTDSQSGESSS.

NADP(+) contacts are provided by residues 36 to 42 (GASSGIG), 88 to 89 (DL), asparagine 115, and threonine 136. A substrate-binding site is contributed by serine 170. Residue tyrosine 192 is the Proton acceptor of the active site. An interaction with calmodulin region spans residues 298 to 314 (DTELAKKVWDFSTKLTD).

Belongs to the short-chain dehydrogenases/reductases (SDR) family. Part of the Tic complex. Interacts with TIC110. As to expression, expressed in leaves and roots.

It is found in the plastid. Its subcellular location is the chloroplast inner membrane. Involved in protein precursor import into chloroplasts. Part of the redox regulon consisting of TIC32, TIC 55 and TIC62. This is Short-chain dehydrogenase TIC 32, chloroplastic from Arabidopsis thaliana (Mouse-ear cress).